A 249-amino-acid polypeptide reads, in one-letter code: Probable GDP-mannose transporter 2 (249 aa).

Over 1–15 (MIYTSSKSLQYLAVP) the chain is Lumenal. The helical transmembrane segment at 16–36 (IYTIFKNLTIILIAYGEVLFF) threads the bilayer. The Cytoplasmic segment spans residues 37-47 (GGKVTSMELTS). A helical transmembrane segment spans residues 48–68 (FIMMVLSSVVATWGDQQAIAI). The Lumenal segment spans residues 69–84 (KASSLEDLDQELVEST). Residues 85-105 (IFVLNPGYLWMFTNCISSALF) form a helical membrane-spanning segment. At 106–122 (VLIMRKRIRLTNFKDYD) the chain is on the cytoplasmic side. A helical transmembrane segment spans residues 123-143 (TMFYNNVLALPLLLVFSFIME). The Lumenal portion of the chain corresponds to 144 to 159 (DWSTKNLSVNLSADSL). N-linked (GlcNAc...) asparagine glycosylation is found at N149 and N153. The helical transmembrane segment at 160-180 (AAMVISGLMSVGISYCSGWCV) threads the bilayer. Residues 181 to 186 (RVTSST) lie on the Cytoplasmic side of the membrane. Residues 187-207 (TYSMVGALNKLPIALAGLVFF) form a helical membrane-spanning segment. The Lumenal segment spans residues 208 to 211 (DAPK). Residues 212-232 (NFLSFFSIFLGFLSGLLYAVA) form a helical membrane-spanning segment. Residues 233–249 (KQKKIQQQKVLAATLEK) are Cytoplasmic-facing.

This sequence belongs to the TPT transporter family. SLC35D subfamily.

The protein resides in the golgi apparatus membrane. It localises to the cytoplasmic vesicle membrane. Its subcellular location is the endoplasmic reticulum membrane. In terms of biological role, involved in the import of GDP-mannose from the cytoplasm into the Golgi lumen. This Saccharomyces cerevisiae (strain RM11-1a) (Baker's yeast) protein is Probable GDP-mannose transporter 2 (HVG1).